Reading from the N-terminus, the 204-residue chain is Hydrophilin YNL190W (204 aa).

An N-terminal signal peptide occupies residues 1–20 (MKFSSVTAITLATVATVATA). A compositionally biased stretch (low complexity) spans 35–46 (SDGSLTTTTSTH). The segment at 35-179 (SDGSLTTTTS…ARKNNAAPGP (145 aa)) is disordered. Positions 47 to 59 (TTHKYGKFNKTSK) are enriched in basic residues. Residues Asn55, Asn64, Asn75, Asn84, Asn95, Asn104, Asn115, Asn124, Asn135, Asn144, and Asn155 are each glycosylated (N-linked (GlcNAc...) asparagine). Residues 67-79 (GTHKYGKFNKTSK) are compositionally biased toward basic residues. A compositionally biased stretch (basic residues) spans 87–99 (GTHKYGKFNKTSK). The segment covering 107–119 (GTHKYGKFNKTSK) has biased composition (basic residues). Residues 127–139 (GTHKYGKFNKTSK) are compositionally biased toward basic residues. The segment covering 147 to 156 (GTHKYGKFNK) has biased composition (basic residues). The GPI-anchor amidated asparagine moiety is linked to residue Asn174. Residues 175 to 204 (AAPGPSNFNSIKLFGVTAGSAAVAGALLLL) constitute a propeptide, removed in mature form.

The protein belongs to the PGA14 family. Post-translationally, the GPI-anchor is attached to the protein in the endoplasmic reticulum and serves to target the protein to the cell surface. There, the glucosamine-inositol phospholipid moiety is cleaved off and the GPI-modified mannoprotein is covalently attached via its lipidless GPI glycan remnant to the 1,6-beta-glucan of the outer cell wall layer.

The protein resides in the secreted. It localises to the cell wall. Its subcellular location is the membrane. In terms of biological role, hydrophilin which is essential to overcome the simple stress of the desiccation-rehydration process. The protein is Hydrophilin YNL190W of Saccharomyces cerevisiae (strain ATCC 204508 / S288c) (Baker's yeast).